We begin with the raw amino-acid sequence, 630 residues long: Long-chain-fatty-acid--AMP ligase FadD32 (630 aa).

ATP is bound by residues 187–192, S342, A346, D469, and R483; that span reads TSGSTR.

The protein belongs to the ATP-dependent AMP-binding enzyme family. As to quaternary structure, monomer.

It carries out the reaction a long-chain fatty acid + holo-[ACP] + ATP = a long-chain fatty acyl-[ACP] + AMP + diphosphate. The catalysed reaction is decanoate + ATP + H(+) = decanoyl-AMP + diphosphate. It catalyses the reaction dodecanoate + ATP + H(+) = dodecanoyl-AMP + diphosphate. The enzyme catalyses tetradecanoate + ATP + H(+) = tetradecanoyl-AMP + diphosphate. The protein operates within lipid metabolism; mycolic acid biosynthesis. The acyl-AMP ligase activity is inhibited by the alkylphosphate ester of AMP, adenosine 50-dodecylphosphate (AMPC12). Also inhibited by eicosyl-AMP (AMPC20). Functionally, involved in the biosynthesis of mycolic acids. Catalyzes the activation of long-chain fatty acids as acyl-adenylates (acyl-AMP), which are then transferred to the phosphopantetheine arm of the polyketide synthase Pks13 for further chain extension. Can use decanoate (C10), dodecanoate (C12) and tetradecanoate (C14). This Mycolicibacterium smegmatis (strain ATCC 700084 / mc(2)155) (Mycobacterium smegmatis) protein is Long-chain-fatty-acid--AMP ligase FadD32.